Reading from the N-terminus, the 141-residue chain is Protein nfe1 (141 aa).

It to the N-terminal of nitrogenase iron protein (NifH). Has lost the ATP-binding site.

Functionally, responsible for the nodulation efficiency and competitive ability of strain GR4 on alfalfa roots. The protein is Protein nfe1 (nfe1) of Rhizobium meliloti (Ensifer meliloti).